The primary structure comprises 450 residues: uncharacterized protein (450 aa).

Residue lysine 283 is modified to N6-(pyridoxal phosphate)lysine.

Belongs to the class-III pyridoxal-phosphate-dependent aminotransferase family. Pyridoxal 5'-phosphate is required as a cofactor.

Essential for glycerol catabolism. This is an uncharacterized protein from Bacillus subtilis (strain 168).